The following is a 456-amino-acid chain: Acyl-CoA transferase FPSE_08120 (456 aa).

Residues 1–33 (MARLLFSGQRLRPSFLRSYIRANPSSTPSATRA) constitute a mitochondrion transit peptide.

It belongs to the CoA-transferase III family.

The protein localises to the mitochondrion. Acyl-CoA transferase; part of the Fusarium detoxification of benzoxazolinone cluster involved in the degradation of benzoxazolinones produced by the host plant. Maize, wheat, and rye produce the 2 benzoxazinone phytoanticipins 2,4-dihy-droxy-7-methoxy-1,4-benzoxazin-3-one (DIMBOA) and 2,4-dihydroxy-1,4-benzoxazin-3-one (DIBOA) that, due to their inherent instability once released, spontaneously degrade to the more stable corresponding benzoxazolinones, 6-methoxy-2-benzoxazolinone (MBOA) and 2-benzoxazolinone (BOA), respectively. The first step in the detoxification of benzoxazolinones involves the hydrolysis of the cyclic ester bond of benzoxazolinones by the gamma-lactamase FDB1 to aminophenols. FDB1 is able to convert 2-benzoxazolinone (BOA) into 2-aminophenol (2-AP), as well as 6-methoxy-2-benzoxazolinone (MBOA) into 5-methoxy-2-aminophenol (2-AMP). The N-malonyltransferase FDB2 then metabolizes aminophenols via N-malonylation to non-toxic malonamic acids. FDB2 converts 2-AP into N-(2-hydroxyphenyl) malonamic acid (HPMA) and 2-AMP into N-(2-hydroxy-4-methoxyphenyl) malonamic acid (HMPMA). The cluster also contains 2 transcription factors (FDB3 and FPSE_08121), an aldo-keto reductase (FPSE_08125) that possibly associates with a ketone component of BOA and MBOA degradation, an esterase (FPSE_08126), an acyl-CoA transferase (FPSE_08120), a solute carrier protein (FPSE_08119) and a transmembrane transporter (FPSE_08127) proposed to shuttle metabolites of benzoxazolinone degradation. This is Acyl-CoA transferase FPSE_08120 from Fusarium pseudograminearum (strain CS3096) (Wheat and barley crown-rot fungus).